A 220-amino-acid chain; its full sequence is Regulatory protein VanRB (220 aa).

The Response regulatory domain maps to 4–117 (RILLVEDDDH…ILLKRVEALL (114 aa)). Residue Asp53 is modified to 4-aspartylphosphate. The segment at residues 124 to 218 (AKEFRVGRLT…IRGVGYRLEE (95 aa)) is a DNA-binding region (ompR/PhoB-type).

May be phosphorylated by VanSB. May also be dephosphorylated by VanSB.

The protein localises to the cytoplasm. Functionally, member of the two-component regulatory system VanSB/VanRB. Activates the transcription of vanSB, vanYB and vanW in response to vancomycin which results in vancomycin resistance. In Enterococcus faecalis (strain ATCC 700802 / V583), this protein is Regulatory protein VanRB (vanRB).